Here is a 485-residue protein sequence, read N- to C-terminus: UDP-N-acetylmuramoyl-L-alanyl-D-glutamate--2,6-diaminopimelate ligase (485 aa).

Residue Ser-30 coordinates UDP-N-acetyl-alpha-D-muramoyl-L-alanyl-D-glutamate. 113–119 (GTNGKTT) is a binding site for ATP. Residues 155 to 156 (TT), Ser-182, and Arg-190 contribute to the UDP-N-acetyl-alpha-D-muramoyl-L-alanyl-D-glutamate site. At Lys-222 the chain carries N6-carboxylysine. Residues Arg-381, 405–408 (DNPR), Gly-455, and Glu-459 contribute to the meso-2,6-diaminopimelate site. The Meso-diaminopimelate recognition motif signature appears at 405–408 (DNPR).

Belongs to the MurCDEF family. MurE subfamily. Mg(2+) is required as a cofactor. In terms of processing, carboxylation is probably crucial for Mg(2+) binding and, consequently, for the gamma-phosphate positioning of ATP.

It is found in the cytoplasm. The enzyme catalyses UDP-N-acetyl-alpha-D-muramoyl-L-alanyl-D-glutamate + meso-2,6-diaminopimelate + ATP = UDP-N-acetyl-alpha-D-muramoyl-L-alanyl-gamma-D-glutamyl-meso-2,6-diaminopimelate + ADP + phosphate + H(+). It participates in cell wall biogenesis; peptidoglycan biosynthesis. In terms of biological role, catalyzes the addition of meso-diaminopimelic acid to the nucleotide precursor UDP-N-acetylmuramoyl-L-alanyl-D-glutamate (UMAG) in the biosynthesis of bacterial cell-wall peptidoglycan. This chain is UDP-N-acetylmuramoyl-L-alanyl-D-glutamate--2,6-diaminopimelate ligase, found in Clostridium tetani (strain Massachusetts / E88).